The primary structure comprises 436 residues: 3-ketoacyl-CoA thiolase (436 aa).

The active-site Acyl-thioester intermediate is the Cys99. Residues His392 and Cys422 each act as proton acceptor in the active site.

This sequence belongs to the thiolase-like superfamily. Thiolase family. As to quaternary structure, heterotetramer of two alpha chains (FadJ) and two beta chains (FadI).

The protein localises to the cytoplasm. The catalysed reaction is an acyl-CoA + acetyl-CoA = a 3-oxoacyl-CoA + CoA. It participates in lipid metabolism; fatty acid beta-oxidation. Catalyzes the final step of fatty acid oxidation in which acetyl-CoA is released and the CoA ester of a fatty acid two carbons shorter is formed. This chain is 3-ketoacyl-CoA thiolase, found in Escherichia coli O9:H4 (strain HS).